The sequence spans 619 residues: Pescadillo homolog (619 aa).

The disordered stretch occupies residues alanine 303 to valine 324. Residues threonine 312–valine 324 are compositionally biased toward acidic residues. The region spanning proline 353 to proline 452 is the BRCT domain. The disordered stretch occupies residues leucine 456–glutamate 567. Coiled-coil stretches lie at residues asparagine 472 to lysine 560 and methionine 588 to valine 619. The span at glutamate 480 to aspartate 522 shows a compositional bias: acidic residues. A compositionally biased stretch (basic and acidic residues) spans leucine 523 to serine 539.

The protein belongs to the pescadillo family. As to quaternary structure, component of the NOP7 complex, composed of ERB1, NOP7 and YTM1. The complex is held together by ERB1, which interacts with NOP7 via its N-terminal domain and with YTM1 via a high-affinity interaction between the seven-bladed beta-propeller domains of the 2 proteins. The NOP7 complex associates with the 66S pre-ribosome.

The protein localises to the nucleus. The protein resides in the nucleolus. It is found in the nucleoplasm. Its function is as follows. Component of the NOP7 complex, which is required for maturation of the 25S and 5.8S ribosomal RNAs and formation of the 60S ribosome. The protein is Pescadillo homolog of Lodderomyces elongisporus (strain ATCC 11503 / CBS 2605 / JCM 1781 / NBRC 1676 / NRRL YB-4239) (Yeast).